We begin with the raw amino-acid sequence, 274 residues long: Bis(5'-nucleosyl)-tetraphosphatase, symmetrical (274 aa).

The protein belongs to the Ap4A hydrolase family.

It catalyses the reaction P(1),P(4)-bis(5'-adenosyl) tetraphosphate + H2O = 2 ADP + 2 H(+). Hydrolyzes diadenosine 5',5'''-P1,P4-tetraphosphate to yield ADP. This Shewanella sediminis (strain HAW-EB3) protein is Bis(5'-nucleosyl)-tetraphosphatase, symmetrical.